The primary structure comprises 212 residues: Urease accessory protein UreG (212 aa).

15-22 (GPVGSGKT) provides a ligand contact to GTP.

The protein belongs to the SIMIBI class G3E GTPase family. UreG subfamily. In terms of assembly, homodimer. UreD, UreF and UreG form a complex that acts as a GTP-hydrolysis-dependent molecular chaperone, activating the urease apoprotein by helping to assemble the nickel containing metallocenter of UreC. The UreE protein probably delivers the nickel.

The protein resides in the cytoplasm. Facilitates the functional incorporation of the urease nickel metallocenter. This process requires GTP hydrolysis, probably effectuated by UreG. The chain is Urease accessory protein UreG from Opitutus terrae (strain DSM 11246 / JCM 15787 / PB90-1).